A 62-amino-acid chain; its full sequence is Large ribosomal subunit protein bL28 (62 aa).

This sequence belongs to the bacterial ribosomal protein bL28 family.

This is Large ribosomal subunit protein bL28 from Acetivibrio thermocellus (strain ATCC 27405 / DSM 1237 / JCM 9322 / NBRC 103400 / NCIMB 10682 / NRRL B-4536 / VPI 7372) (Clostridium thermocellum).